The primary structure comprises 162 residues: uncharacterized protein (162 aa).

Helical transmembrane passes span 10–30 (ILSF…MLIL), 50–70 (IVEL…ALYN), 96–116 (IAQY…IILL), and 125–145 (FTAI…LFIF).

It is found in the cell membrane. This is an uncharacterized protein from Methanocaldococcus jannaschii (strain ATCC 43067 / DSM 2661 / JAL-1 / JCM 10045 / NBRC 100440) (Methanococcus jannaschii).